Here is a 173-residue protein sequence, read N- to C-terminus: Large ribosomal subunit protein uL10 (173 aa).

Belongs to the universal ribosomal protein uL10 family. As to quaternary structure, part of the ribosomal stalk of the 50S ribosomal subunit. The N-terminus interacts with L11 and the large rRNA to form the base of the stalk. The C-terminus forms an elongated spine to which L12 dimers bind in a sequential fashion forming a multimeric L10(L12)X complex.

Its function is as follows. Forms part of the ribosomal stalk, playing a central role in the interaction of the ribosome with GTP-bound translation factors. The sequence is that of Large ribosomal subunit protein uL10 from Nitratidesulfovibrio vulgaris (strain ATCC 29579 / DSM 644 / CCUG 34227 / NCIMB 8303 / VKM B-1760 / Hildenborough) (Desulfovibrio vulgaris).